Consider the following 464-residue polypeptide: NADH-quinone oxidoreductase subunit N 2 (464 aa).

Helical transmembrane passes span 12 to 32, 33 to 53, 62 to 82, 93 to 113, 117 to 137, 152 to 172, 189 to 209, 227 to 247, 254 to 274, 282 to 304, 310 to 330, 351 to 371, 400 to 420, and 434 to 454; these read VGIIFLIILELFLPSFDLIGF, LGFLISFISGVLAIKYSLAGY, INAFSLLLKGVMYILTSFVIF, TFVENVYTFLLISLGLSIMVS, LAVILAGLELASISMYISVGM, LVLGSMTTAFFGIGSAFYIGA, FALASLFLFVAFALKVSAAPF, FISTVPKIGFYAVLFLLASYI, FSYIVGIVGVISMFWGNLVAY, MLAYSSIGHAGYFLIGFSRYNPL, IFYVIVYAFATAGAFLVLSIL, PFLATALALFLFALIGIPPFA, IIAAGYYLKLIVYMFFKEPAT, and IGISAFLIIVFFFGIFPNILF.

It belongs to the complex I subunit 2 family. As to quaternary structure, NDH-1 is composed of 14 different subunits. Subunits NuoA, H, J, K, L, M, N constitute the membrane sector of the complex.

The protein resides in the cell inner membrane. The enzyme catalyses a quinone + NADH + 5 H(+)(in) = a quinol + NAD(+) + 4 H(+)(out). NDH-1 shuttles electrons from NADH, via FMN and iron-sulfur (Fe-S) centers, to quinones in the respiratory chain. The immediate electron acceptor for the enzyme in this species is believed to be ubiquinone. Couples the redox reaction to proton translocation (for every two electrons transferred, four hydrogen ions are translocated across the cytoplasmic membrane), and thus conserves the redox energy in a proton gradient. This chain is NADH-quinone oxidoreductase subunit N 2, found in Hydrogenobaculum sp. (strain Y04AAS1).